We begin with the raw amino-acid sequence, 346 residues long: Peripherin-2 (346 aa).

The Cytoplasmic segment spans residues 1–24 (MALLKVKFDQKKRVKLAQGLWLMN). A helical transmembrane segment spans residues 25 to 43 (WLSVLAGIVIFSLGLFLKI). Residues 44 to 61 (ELRKRSDVMNNSESHFVP) lie on the Lumenal side of the membrane. Residue asparagine 53 is glycosylated (N-linked (GlcNAc...) asparagine). Residues 62–80 (NSLIVMGVLSCVFNSLAGK) form a helical membrane-spanning segment. Residues 81–99 (ICYDALDPAKYAKWKPWLK) lie on the Cytoplasmic side of the membrane. A helical transmembrane segment spans residues 100–123 (PYLAVCVLFNIALFLVTLCCFLMR). The Lumenal portion of the chain corresponds to 124–264 (GSLESTLAHG…LSYYSSLMNS (141 aa)). A glycan (N-linked (GlcNAc...) asparagine) is linked at asparagine 229. Residues 265 to 290 (MGAVTLLVWLFEVTITIGLRYLHTAL) traverse the membrane as a helical segment. The Cytoplasmic segment spans residues 291–346 (EGVSNPEDPECESEGWLLEKSVSETWKAFLESLKKLGKSNQVEAEGADAGQAPEAG). Residues 341–346 (QAPEAG) form an interaction with MREG region.

This sequence belongs to the PRPH2/ROM1 family. In terms of assembly, homodimer; disulfide-linked. Forms a homotetramer. Forms a heterotetramer with ROM1. Homotetramer and heterotetramer core complexes go on to form higher order complexes by formation of intermolecular disulfide bonds. Interacts with MREG. Interacts with STX3. Interacts with SNAP25. As to expression, retina (photoreceptor). In rim region of ROS (rod outer segment) disks.

It localises to the membrane. The protein localises to the cell projection. It is found in the cilium. Its subcellular location is the photoreceptor outer segment. The protein resides in the photoreceptor inner segment. Its function is as follows. Essential for retina photoreceptor outer segment disk morphogenesis, may also play a role with ROM1 in the maintenance of outer segment disk structure. Required for the maintenance of retinal outer nuclear layer thickness. Required for the correct development and organization of the photoreceptor inner segment. The chain is Peripherin-2 (PRPH2) from Canis lupus familiaris (Dog).